The sequence spans 729 residues: Phosphoribosylformylglycinamidine synthase subunit PurL (729 aa).

Histidine 54 is an active-site residue. Positions 57 and 96 each coordinate ATP. Glutamate 98 lines the Mg(2+) pocket. Substrate contacts are provided by residues 99–102 (SHNH) and arginine 121. The active-site Proton acceptor is the histidine 100. Mg(2+) is bound at residue aspartate 122. Glutamine 245 contacts substrate. Position 273 (aspartate 273) interacts with Mg(2+). A substrate-binding site is contributed by 317–319 (ETQ). Residues aspartate 495 and glycine 532 each coordinate ATP. Residue asparagine 533 coordinates Mg(2+). Serine 535 is a binding site for substrate.

This sequence belongs to the FGAMS family. In terms of assembly, monomer. Part of the FGAM synthase complex composed of 1 PurL, 1 PurQ and 2 PurS subunits.

It localises to the cytoplasm. It catalyses the reaction N(2)-formyl-N(1)-(5-phospho-beta-D-ribosyl)glycinamide + L-glutamine + ATP + H2O = 2-formamido-N(1)-(5-O-phospho-beta-D-ribosyl)acetamidine + L-glutamate + ADP + phosphate + H(+). It participates in purine metabolism; IMP biosynthesis via de novo pathway; 5-amino-1-(5-phospho-D-ribosyl)imidazole from N(2)-formyl-N(1)-(5-phospho-D-ribosyl)glycinamide: step 1/2. Part of the phosphoribosylformylglycinamidine synthase complex involved in the purines biosynthetic pathway. Catalyzes the ATP-dependent conversion of formylglycinamide ribonucleotide (FGAR) and glutamine to yield formylglycinamidine ribonucleotide (FGAM) and glutamate. The FGAM synthase complex is composed of three subunits. PurQ produces an ammonia molecule by converting glutamine to glutamate. PurL transfers the ammonia molecule to FGAR to form FGAM in an ATP-dependent manner. PurS interacts with PurQ and PurL and is thought to assist in the transfer of the ammonia molecule from PurQ to PurL. This chain is Phosphoribosylformylglycinamidine synthase subunit PurL, found in Staphylococcus aureus (strain Mu3 / ATCC 700698).